Reading from the N-terminus, the 428-residue chain is Serine--tRNA ligase (428 aa).

L-serine is bound at residue 235–237; the sequence is TAE. 266–268 contributes to the ATP binding site; it reads RSE. Glu289 provides a ligand contact to L-serine. 353-356 is an ATP binding site; the sequence is EISS. Position 389 (Ser389) interacts with L-serine.

It belongs to the class-II aminoacyl-tRNA synthetase family. Type-1 seryl-tRNA synthetase subfamily. In terms of assembly, homodimer. The tRNA molecule binds across the dimer.

The protein localises to the cytoplasm. It catalyses the reaction tRNA(Ser) + L-serine + ATP = L-seryl-tRNA(Ser) + AMP + diphosphate + H(+). The enzyme catalyses tRNA(Sec) + L-serine + ATP = L-seryl-tRNA(Sec) + AMP + diphosphate + H(+). It functions in the pathway aminoacyl-tRNA biosynthesis; selenocysteinyl-tRNA(Sec) biosynthesis; L-seryl-tRNA(Sec) from L-serine and tRNA(Sec): step 1/1. Functionally, catalyzes the attachment of serine to tRNA(Ser). Is also able to aminoacylate tRNA(Sec) with serine, to form the misacylated tRNA L-seryl-tRNA(Sec), which will be further converted into selenocysteinyl-tRNA(Sec). The polypeptide is Serine--tRNA ligase (Pasteurella multocida (strain Pm70)).